The chain runs to 148 residues: UPF0756 membrane protein ESA_02180 (148 aa).

The next 4 helical transmembrane spans lie at 4 to 24 (ITLLILLALAGLGFVSHNMAV), 51 to 71 (VTVGIIILTISVMAPIASGTL), 86 to 106 (LVAIAVGVFVSWLGGKGVALM), and 112 to 132 (IVAGLLVGTVLGVALFRGVPV).

It belongs to the UPF0756 family.

Its subcellular location is the cell membrane. The chain is UPF0756 membrane protein ESA_02180 from Cronobacter sakazakii (strain ATCC BAA-894) (Enterobacter sakazakii).